The chain runs to 293 residues: Pyridoxal 5'-phosphate synthase subunit PdxS (293 aa).

A D-ribose 5-phosphate-binding site is contributed by aspartate 23. The active-site Schiff-base intermediate with D-ribose 5-phosphate is the lysine 80. D-ribose 5-phosphate is bound at residue glycine 152. Arginine 164 serves as a coordination point for D-glyceraldehyde 3-phosphate. Residues glycine 213 and glycine 234–serine 235 contribute to the D-ribose 5-phosphate site.

The protein belongs to the PdxS/SNZ family. In terms of assembly, in the presence of PdxT, forms a dodecamer of heterodimers.

The enzyme catalyses aldehydo-D-ribose 5-phosphate + D-glyceraldehyde 3-phosphate + L-glutamine = pyridoxal 5'-phosphate + L-glutamate + phosphate + 3 H2O + H(+). It participates in cofactor biosynthesis; pyridoxal 5'-phosphate biosynthesis. Functionally, catalyzes the formation of pyridoxal 5'-phosphate from ribose 5-phosphate (RBP), glyceraldehyde 3-phosphate (G3P) and ammonia. The ammonia is provided by the PdxT subunit. Can also use ribulose 5-phosphate and dihydroxyacetone phosphate as substrates, resulting from enzyme-catalyzed isomerization of RBP and G3P, respectively. In Niallia circulans (Bacillus circulans), this protein is Pyridoxal 5'-phosphate synthase subunit PdxS.